Consider the following 1015-residue polypeptide: PHD finger protein 20-like protein 1 (1015 aa).

The Tudor 1 domain occupies 11–71; sequence ITFEIGARLE…SNRLRPLERP (61 aa). Residues lysine 75 and lysine 79 each participate in a glycyl lysine isopeptide (Lys-Gly) (interchain with G-Cter in SUMO2) cross-link. Positions 85–141 constitute a Tudor 2 domain; the sequence is FDFKAGEEVLARWTDCRYYPAKIEAINKEGTFTVQFYDGVIRCLKRMHIKAMPEDAK. 2 disordered regions span residues 183–206 and 309–367; these read AKNKTGSKPRTSANSNKEKERDGG and EQAI…KAPK. Composition is skewed to polar residues over residues 186 to 197 and 315 to 346; these read KTGSKPRTSANS and KPQSQKKNEAVISSSANTQKPALLSSTLSSGK. Residue serine 368 is modified to Phosphoserine. Disordered stretches follow at residues 389–455 and 478–513; these read VINK…SSVP and CGSEVTGSQAPDSSYPGGECPREEKEETPLFANPTS. Residues 404-415 are compositionally biased toward basic residues; the sequence is PCKHSERRRRSQ. Serine 432 bears the Phosphoserine mark. Composition is skewed to polar residues over residues 443 to 453 and 480 to 489; these read SISSQNQQESS and SEVTGSQAPD. Residue lysine 530 forms a Glycyl lysine isopeptide (Lys-Gly) (interchain with G-Cter in SUMO2) linkage. Basic and acidic residues predominate over residues 539–565; sequence EKTSTAFGKRKEKDKERKEKRDKDHYK. The tract at residues 539–585 is disordered; sequence EKTSTAFGKRKEKDKERKEKRDKDHYKPKQKKKKKKKKKSKQHDYSD. Residues 566–579 show a composition bias toward basic residues; it reads PKQKKKKKKKKKSK. A PHD-type zinc finger spans residues 681-729; it reads IVRCICELDEENGFMIQCEECLCWQHSVCMGLLEDSIPEQYICYICRDP. Residue lysine 849 forms a Glycyl lysine isopeptide (Lys-Gly) (interchain with G-Cter in SUMO2) linkage. Polar residues predominate over residues 859–878; the sequence is HSYQKPQSFSQDCHSLTDPG. Residues 859 to 889 form a disordered region; sequence HSYQKPQSFSQDCHSLTDPGSSDDDDVSSFE. Positions 879 to 889 are enriched in acidic residues; that stretch reads SSDDDDVSSFE. An N6-acetyllysine modification is found at lysine 907.

Interacts with methylated DNMT1 (DNMT1K142me1). Interacts with SOX2.

The protein resides in the nucleus. Is a negative regulator of proteasomal degradation of a set of methylated proteins, including DNMT1 and SOX2. Involved in the maintainance of embryonic stem cells pluripotency, through the regulation of SOX2 levels. This Rattus norvegicus (Rat) protein is PHD finger protein 20-like protein 1 (Phf20l1).